The chain runs to 284 residues: UPF0294 protein VV1_1880 (284 aa).

The protein belongs to the UPF0294 family.

It localises to the cytoplasm. The polypeptide is UPF0294 protein VV1_1880 (Vibrio vulnificus (strain CMCP6)).